Consider the following 120-residue polypeptide: ATP-dependent Clp protease adapter protein ClpS (120 aa).

Belongs to the ClpS family. Binds to the N-terminal domain of the chaperone ClpA.

Functionally, involved in the modulation of the specificity of the ClpAP-mediated ATP-dependent protein degradation. This is ATP-dependent Clp protease adapter protein ClpS from Pseudomonas syringae pv. tomato (strain ATCC BAA-871 / DC3000).